The chain runs to 441 residues: Probable D-serine dehydratase (441 aa).

The residue at position 115 (lysine 115) is an N6-(pyridoxal phosphate)lysine.

This sequence belongs to the serine/threonine dehydratase family. DsdA subfamily. Pyridoxal 5'-phosphate is required as a cofactor.

It catalyses the reaction D-serine = pyruvate + NH4(+). The chain is Probable D-serine dehydratase from Fusobacterium nucleatum subsp. nucleatum (strain ATCC 25586 / DSM 15643 / BCRC 10681 / CIP 101130 / JCM 8532 / KCTC 2640 / LMG 13131 / VPI 4355).